We begin with the raw amino-acid sequence, 368 residues long: Endophilin-A2 (368 aa).

Residues 1–21 form a membrane-binding amphipathic helix region; the sequence is MSVAGLKKQFYKASQLVSEKV. The BAR domain occupies 18–249; it reads SEKVGGAEGT…LKRRVREASS (232 aa). The tract at residues 60-87 is required for dimerization upon membrane association; sequence PNPASRAKLTMLNTVSKIRGQVKNPGYP. Residues 180-250 are a coiled coil; the sequence is DEELRQALEK…KRRVREASSR (71 aa). An interaction with ARC region spans residues 218–254; the sequence is LVDAQLDYHRQAVQILEELADKLKRRVREASSRPRRE. The tract at residues 243-309 is disordered; it reads RVREASSRPR…SKSMPPLDQP (67 aa). Over residues 245-261 the composition is skewed to basic and acidic residues; it reads REASSRPRREFKPRPQE. Serine 288 is modified (phosphoserine). Threonine 298 is modified (phosphothreonine). An SH3 domain is found at 306 to 365; it reads LDQPSCKALYDFEPENDGELGFREGDLITLTNQIDENWYEGMLHGQSGFFPLSYVQVLVP. Phosphotyrosine is present on tyrosine 315.

The protein belongs to the endophilin family. Interacts with ARC, SYNJ1 and DNM1. Interacts with PDCD6IP. Interacts with BIN2. Detected in brain and testis (at protein level). Ubiquitous.

The protein resides in the cytoplasm. Its subcellular location is the early endosome membrane. It is found in the cell projection. The protein localises to the podosome. Functionally, implicated in endocytosis. May recruit other proteins to membranes with high curvature. This Rattus norvegicus (Rat) protein is Endophilin-A2 (Sh3gl1).